A 332-amino-acid chain; its full sequence is Glycerol-3-phosphate dehydrogenase [NAD(P)+] (332 aa).

Residues Ser15, Trp16, and Lys110 each coordinate NADPH. Sn-glycerol 3-phosphate-binding residues include Lys110, Gly137, and Ser139. An NADPH-binding site is contributed by Ala141. Lys192, Asp245, Ser255, Arg256, and Asn257 together coordinate sn-glycerol 3-phosphate. Lys192 (proton acceptor) is an active-site residue. NADPH is bound at residue Arg256. Glu282 lines the NADPH pocket.

It belongs to the NAD-dependent glycerol-3-phosphate dehydrogenase family.

The protein localises to the cytoplasm. The catalysed reaction is sn-glycerol 3-phosphate + NAD(+) = dihydroxyacetone phosphate + NADH + H(+). It carries out the reaction sn-glycerol 3-phosphate + NADP(+) = dihydroxyacetone phosphate + NADPH + H(+). It participates in membrane lipid metabolism; glycerophospholipid metabolism. Its function is as follows. Catalyzes the reduction of the glycolytic intermediate dihydroxyacetone phosphate (DHAP) to sn-glycerol 3-phosphate (G3P), the key precursor for phospholipid synthesis. This is Glycerol-3-phosphate dehydrogenase [NAD(P)+] from Coxiella burnetii (strain CbuG_Q212) (Coxiella burnetii (strain Q212)).